Consider the following 869-residue polypeptide: Valine--tRNA ligase (869 aa).

The 'HIGH' region motif lies at 47 to 57 (PYPTGNFHIGN). Positions 521-525 (KMSKS) match the 'KMSKS' region motif. Residue K524 coordinates ATP.

It belongs to the class-I aminoacyl-tRNA synthetase family. ValS type 2 subfamily.

Its subcellular location is the cytoplasm. The catalysed reaction is tRNA(Val) + L-valine + ATP = L-valyl-tRNA(Val) + AMP + diphosphate. Functionally, catalyzes the attachment of valine to tRNA(Val). As ValRS can inadvertently accommodate and process structurally similar amino acids such as threonine, to avoid such errors, it has a 'posttransfer' editing activity that hydrolyzes mischarged Thr-tRNA(Val) in a tRNA-dependent manner. In Methanosarcina acetivorans (strain ATCC 35395 / DSM 2834 / JCM 12185 / C2A), this protein is Valine--tRNA ligase.